The primary structure comprises 365 residues: Anhydro-N-acetylmuramic acid kinase (365 aa).

Position 9-16 (9-16) interacts with ATP; it reads GTSLDGVD.

The protein belongs to the anhydro-N-acetylmuramic acid kinase family.

It carries out the reaction 1,6-anhydro-N-acetyl-beta-muramate + ATP + H2O = N-acetyl-D-muramate 6-phosphate + ADP + H(+). The protein operates within amino-sugar metabolism; 1,6-anhydro-N-acetylmuramate degradation. It functions in the pathway cell wall biogenesis; peptidoglycan recycling. In terms of biological role, catalyzes the specific phosphorylation of 1,6-anhydro-N-acetylmuramic acid (anhMurNAc) with the simultaneous cleavage of the 1,6-anhydro ring, generating MurNAc-6-P. Is required for the utilization of anhMurNAc either imported from the medium or derived from its own cell wall murein, and thus plays a role in cell wall recycling. This chain is Anhydro-N-acetylmuramic acid kinase, found in Rhodopseudomonas palustris (strain BisB18).